The following is a 211-amino-acid chain: Ribosomal RNA small subunit methyltransferase G (211 aa).

3 residues coordinate S-adenosyl-L-methionine: Gly73, Phe78, and Arg141.

The protein belongs to the methyltransferase superfamily. RNA methyltransferase RsmG family.

It localises to the cytoplasm. It catalyses the reaction guanosine(527) in 16S rRNA + S-adenosyl-L-methionine = N(7)-methylguanosine(527) in 16S rRNA + S-adenosyl-L-homocysteine. Its function is as follows. Specifically methylates the N7 position of guanine in position 527 of 16S rRNA. In Jannaschia sp. (strain CCS1), this protein is Ribosomal RNA small subunit methyltransferase G.